The chain runs to 492 residues: uncharacterized protein (492 aa).

266–273 contacts ATP; it reads GIQGTGKS.

Belongs to the AAA ATPase family. Highly divergent.

Its subcellular location is the plastid. The protein localises to the chloroplast. This is an uncharacterized protein from Pyropia yezoensis (Susabi-nori).